The following is a 42-amino-acid chain: Cytochrome b6-f complex subunit 7 (42 aa).

Residues 15–35 (IVTAAVTCIFMVLFGLSLGFA) traverse the membrane as a helical segment.

It belongs to the PetM family. As to quaternary structure, the 4 large subunits of the cytochrome b6-f complex are cytochrome b6, subunit IV (17 kDa polypeptide, PetD), cytochrome f and the Rieske protein, while the 4 small subunits are PetG, PetL, PetM and PetN. The complex functions as a dimer.

Its subcellular location is the plastid. It is found in the chloroplast thylakoid membrane. In terms of biological role, component of the cytochrome b6-f complex, which mediates electron transfer between photosystem II (PSII) and photosystem I (PSI), cyclic electron flow around PSI, and state transitions. This is Cytochrome b6-f complex subunit 7 from Trieres chinensis (Marine centric diatom).